A 64-amino-acid polypeptide reads, in one-letter code: Alpha-like toxin BmK M2 (64 aa).

Residues 2–64 (RDAYIAKPHN…VPIRVPGKCH (63 aa)) form the LCN-type CS-alpha/beta domain. Intrachain disulfides connect cysteine 12-cysteine 63, cysteine 16-cysteine 36, cysteine 22-cysteine 46, and cysteine 26-cysteine 48.

The protein belongs to the long (4 C-C) scorpion toxin superfamily. Sodium channel inhibitor family. Alpha subfamily. As to expression, expressed by the venom gland.

It localises to the secreted. Its function is as follows. Alpha toxins bind voltage-independently at site-3 of sodium channels (Nav) and inhibit the inactivation of the activated channels, thereby blocking neuronal transmission. This toxin is active against both mammals and insects, and is classified as an alpha-like toxin. This Olivierus martensii (Manchurian scorpion) protein is Alpha-like toxin BmK M2.